A 338-amino-acid chain; its full sequence is Alanine racemase (338 aa).

The active-site Proton acceptor; specific for D-alanine is Lys-33. Position 33 is an N6-(pyridoxal phosphate)lysine (Lys-33). Arg-126 is a binding site for substrate. The Proton acceptor; specific for L-alanine role is filled by Tyr-236. Met-284 serves as a coordination point for substrate.

This sequence belongs to the alanine racemase family. The cofactor is pyridoxal 5'-phosphate.

The catalysed reaction is L-alanine = D-alanine. The protein operates within amino-acid biosynthesis; D-alanine biosynthesis; D-alanine from L-alanine: step 1/1. In terms of biological role, catalyzes the interconversion of L-alanine and D-alanine. May also act on other amino acids. This is Alanine racemase (alr) from Aquifex aeolicus (strain VF5).